A 233-amino-acid polypeptide reads, in one-letter code: tRNA (guanine-N(7)-)-methyltransferase (233 aa).

The disordered stretch occupies residues 1–22; sequence MIDENHPMRAAGNFFGRRHGKP. Positions 64, 89, 116, and 138 each coordinate S-adenosyl-L-methionine. The active site involves Asp-138. Substrate contacts are provided by residues Lys-142, Asp-174, and 212–215; that span reads TRYE.

The protein belongs to the class I-like SAM-binding methyltransferase superfamily. TrmB family.

The enzyme catalyses guanosine(46) in tRNA + S-adenosyl-L-methionine = N(7)-methylguanosine(46) in tRNA + S-adenosyl-L-homocysteine. Its pathway is tRNA modification; N(7)-methylguanine-tRNA biosynthesis. Its function is as follows. Catalyzes the formation of N(7)-methylguanine at position 46 (m7G46) in tRNA. This chain is tRNA (guanine-N(7)-)-methyltransferase, found in Brucella melitensis biotype 1 (strain ATCC 23456 / CCUG 17765 / NCTC 10094 / 16M).